The following is an 88-amino-acid chain: Defensin-like protein 267 (88 aa).

The N-terminal stretch at 1 to 23 (MMLSKVVLLALLLSLSCLWVAKA) is a signal peptide. Intrachain disulfides connect Cys-45–Cys-63, Cys-51–Cys-68, and Cys-55–Cys-70.

Belongs to the DEFL family.

The protein localises to the secreted. The chain is Defensin-like protein 267 from Arabidopsis thaliana (Mouse-ear cress).